The sequence spans 388 residues: Ferrochelatase (388 aa).

Fe cation-binding residues include His-196 and Glu-277.

It belongs to the ferrochelatase family.

It is found in the cytoplasm. It carries out the reaction heme b + 2 H(+) = protoporphyrin IX + Fe(2+). The protein operates within porphyrin-containing compound metabolism; protoheme biosynthesis; protoheme from protoporphyrin-IX: step 1/1. Its function is as follows. Catalyzes the ferrous insertion into protoporphyrin IX. The sequence is that of Ferrochelatase from Nostoc punctiforme (strain ATCC 29133 / PCC 73102).